The following is a 392-amino-acid chain: MASFTKTVLIPIAHGTEPLEAVAMITVLRRGGADVTVASVETQVGVDACHGIKMVADTLLSDITDSVFDLIVLPGGLPGGETLKNCKSLENMVKKQDSDGRLNAAICCAPALALGTWGLLEGKKATGYPVFMEKLAATCATAVESRVQIDGRIVTSRGPGTTIEFSITLIEQLFGKEKADEVSSILLLRPNPGEEFTFTELNQTNWSFEDTPQILVPIAEESEEIEAIALVDILRRAKANVVIAAVGNSLEVEGSRKAKLVAEVLLDEVAEKSFDLIVLPGGLNGAQRFASCEKLVNMLRKQAEANKPYGGICASPAYVFEPNGLLKGKKATTHPVVSDKLSDKSHIEHRVVVDGNVITSRAPGTAMEFSLAIVEKFYGREKALQLGKATLV.

PfpI endopeptidase domains lie at 6-174 and 212-378; these read KTVL…EQLF and PQIL…EKFY.

The protein belongs to the peptidase C56 family. In terms of assembly, homodimer. Interacts with CSD1 and GPX2.

It localises to the cytoplasm. The protein resides in the cytosol. Its subcellular location is the nucleus. Involved in oxidative stress response. Confers protection against diverse stresses by binding both CSD1 and GPX2 and mediating the cytosolic activation of the Cu-Zn-dependent superoxide dismutase activity of CSD1. This chain is Protein DJ-1 homolog A (DJ1A), found in Arabidopsis thaliana (Mouse-ear cress).